The sequence spans 222 residues: Probable transaldolase 2 (222 aa).

Lysine 90 acts as the Schiff-base intermediate with substrate in catalysis.

Belongs to the transaldolase family. Type 3B subfamily.

It is found in the cytoplasm. The catalysed reaction is D-sedoheptulose 7-phosphate + D-glyceraldehyde 3-phosphate = D-erythrose 4-phosphate + beta-D-fructose 6-phosphate. It participates in carbohydrate degradation; pentose phosphate pathway; D-glyceraldehyde 3-phosphate and beta-D-fructose 6-phosphate from D-ribose 5-phosphate and D-xylulose 5-phosphate (non-oxidative stage): step 2/3. Functionally, transaldolase is important for the balance of metabolites in the pentose-phosphate pathway. The protein is Probable transaldolase 2 of Bacillus cereus (strain ATCC 14579 / DSM 31 / CCUG 7414 / JCM 2152 / NBRC 15305 / NCIMB 9373 / NCTC 2599 / NRRL B-3711).